Here is a 107-residue protein sequence, read N- to C-terminus: Iron-binding protein IscA (107 aa).

Residues Cys35, Cys99, and Cys101 each coordinate Fe cation.

Belongs to the HesB/IscA family. Homodimer; may form tetramers and higher multimers. Fe cation is required as a cofactor.

Is able to transfer iron-sulfur clusters to apo-ferredoxin. Multiple cycles of [2Fe2S] cluster formation and transfer are observed, suggesting that IscA acts catalytically. Recruits intracellular free iron so as to provide iron for the assembly of transient iron-sulfur cluster in IscU in the presence of IscS, L-cysteine and the thioredoxin reductase system TrxA/TrxB. The polypeptide is Iron-binding protein IscA (Klebsiella pneumoniae subsp. pneumoniae (strain ATCC 700721 / MGH 78578)).